Here is a 282-residue protein sequence, read N- to C-terminus: uncharacterized protein (282 aa).

Residues 205-277 adopt a coiled-coil conformation; it reads LAQQRRVYAQ…DELQNKARDA (73 aa).

This is an uncharacterized protein from Treponema pallidum (strain Nichols).